The sequence spans 239 residues: Aspartate/glutamate leucyltransferase (239 aa).

This sequence belongs to the R-transferase family. Bpt subfamily.

Its subcellular location is the cytoplasm. The catalysed reaction is N-terminal L-glutamyl-[protein] + L-leucyl-tRNA(Leu) = N-terminal L-leucyl-L-glutamyl-[protein] + tRNA(Leu) + H(+). The enzyme catalyses N-terminal L-aspartyl-[protein] + L-leucyl-tRNA(Leu) = N-terminal L-leucyl-L-aspartyl-[protein] + tRNA(Leu) + H(+). Its function is as follows. Functions in the N-end rule pathway of protein degradation where it conjugates Leu from its aminoacyl-tRNA to the N-termini of proteins containing an N-terminal aspartate or glutamate. This chain is Aspartate/glutamate leucyltransferase, found in Campylobacter jejuni subsp. jejuni serotype O:2 (strain ATCC 700819 / NCTC 11168).